A 330-amino-acid polypeptide reads, in one-letter code: Beta-hexosaminidase (330 aa).

Residues aspartate 62, arginine 70, arginine 130, and 160-161 (KH) contribute to the substrate site. Histidine 173 (proton donor/acceptor) is an active-site residue. Aspartate 242 (nucleophile) is an active-site residue.

This sequence belongs to the glycosyl hydrolase 3 family. NagZ subfamily. Monomer.

It is found in the cytoplasm. It carries out the reaction Hydrolysis of terminal non-reducing N-acetyl-D-hexosamine residues in N-acetyl-beta-D-hexosaminides.. It functions in the pathway cell wall biogenesis; peptidoglycan recycling. Its function is as follows. Plays a role in peptidoglycan recycling by cleaving the terminal beta-1,4-linked N-acetylglucosamine (GlcNAc) from peptide-linked peptidoglycan fragments, giving rise to free GlcNAc, anhydro-N-acetylmuramic acid and anhydro-N-acetylmuramic acid-linked peptides. Plays a role in beta-lactam antibiotic resistance via its role in generating anhydro-N-acetylmuramic acid-linked peptides; these peptides function as signaling molecules that induce high-level expression of the beta-lactamase AmpC. This is Beta-hexosaminidase from Vibrio cholerae serotype O1 (strain ATCC 39315 / El Tor Inaba N16961).